We begin with the raw amino-acid sequence, 81 residues long: Acyl carrier protein (81 aa).

The Carrier domain maps to 2 to 80; it reads SKVDNIEQKV…DVVNYIKEHK (79 aa). Serine 40 carries the O-(pantetheine 4'-phosphoryl)serine modification.

This sequence belongs to the acyl carrier protein (ACP) family. Post-translationally, 4'-phosphopantetheine is transferred from CoA to a specific serine of apo-ACP by AcpS. This modification is essential for activity because fatty acids are bound in thioester linkage to the sulfhydryl of the prosthetic group.

Its subcellular location is the cytoplasm. It participates in lipid metabolism; fatty acid biosynthesis. Carrier of the growing fatty acid chain in fatty acid biosynthesis. This Rickettsia bellii (strain OSU 85-389) protein is Acyl carrier protein.